Reading from the N-terminus, the 649-residue chain is DNA topoisomerase 3 (649 aa).

The Toprim domain maps to 1–134; sequence MRLFIAEKPS…KRQQVRRCLI (134 aa). The Mg(2+) site is built by Glu-7, Asp-103, and Asp-105. One can recognise a Topo IA-type catalytic domain in the interval 155-603; the sequence is FVPLCVSALA…PLVGTLYQLI (449 aa). The tract at residues 194 to 199 is interaction with DNA; sequence SVGRVQ. Tyr-328 acts as the O-(5'-phospho-DNA)-tyrosine intermediate in catalysis. The interval 614-649 is disordered; the sequence is FRGIVAPGGGDKKKSAPRKRAGKKSPPAAETGRQTE.

This sequence belongs to the type IA topoisomerase family. Mg(2+) is required as a cofactor.

The catalysed reaction is ATP-independent breakage of single-stranded DNA, followed by passage and rejoining.. Its function is as follows. Releases the supercoiling and torsional tension of DNA, which is introduced during the DNA replication and transcription, by transiently cleaving and rejoining one strand of the DNA duplex. Introduces a single-strand break via transesterification at a target site in duplex DNA. The scissile phosphodiester is attacked by the catalytic tyrosine of the enzyme, resulting in the formation of a DNA-(5'-phosphotyrosyl)-enzyme intermediate and the expulsion of a 3'-OH DNA strand. The free DNA strand then undergoes passage around the unbroken strand, thus removing DNA supercoils. Finally, in the religation step, the DNA 3'-OH attacks the covalent intermediate to expel the active-site tyrosine and restore the DNA phosphodiester backbone. The polypeptide is DNA topoisomerase 3 (Salmonella typhimurium (strain LT2 / SGSC1412 / ATCC 700720)).